The sequence spans 356 residues: MATSAPVTSRTETLAKYLKLDQKGQIMAEYVWVDAAGETRSKSRTLPEKDYKAEDLPVWNFDGSSTNQAPGDNSDVYLRPCAVYPDPFRGSPNIIVLAECWNAGGTPNKFNFRHDCVKVMDTYAEDEPWFGLEQEYTLLGPDNRPYGWPTGGFPAPQGEYYCGVGTGKVVQRDIVEAHYKACLYAGIQISGTNAEVMPAQWEYQVGPCLGIEMGDQLWVSRFFLARITEEFGAKVSLHPKPIAGDWNGAGLHSNFSTKAMREEGGMKVIEEALKKLEPHHAECIAEYGEDNELRLTGRHETGSIDSFSWGVANRGTSIRAPRETAAKGYGYFEDRRPASNADPYRVTKALLQFSLA.

The region spanning 26 to 105 is the GS beta-grasp domain; that stretch reads IMAEYVWVDA…VLAECWNAGG (80 aa). The GS catalytic domain occupies 112–356; that stretch reads FRHDCVKVMD…TKALLQFSLA (245 aa).

It belongs to the glutamine synthetase family. In terms of assembly, homooctamer.

It localises to the cytoplasm. It catalyses the reaction L-glutamate + NH4(+) + ATP = L-glutamine + ADP + phosphate + H(+). The sequence is that of Glutamine synthetase (GLN1) from Fusarium solani subsp. phaseoli (Nectria haematococca).